Here is a 179-residue protein sequence, read N- to C-terminus: Macro domain-containing protein XAC3343 (179 aa).

The Macro domain maps to 1–175 (MRIEVWQGDI…AYQQALATQE (175 aa)).

Belongs to the MacroD-type family.

The chain is Macro domain-containing protein XAC3343 from Xanthomonas axonopodis pv. citri (strain 306).